A 172-amino-acid chain; its full sequence is Protein-export protein SecB (172 aa).

Belongs to the SecB family. In terms of assembly, homotetramer, a dimer of dimers. One homotetramer interacts with 1 SecA dimer.

The protein resides in the cytoplasm. Its function is as follows. One of the proteins required for the normal export of preproteins out of the cell cytoplasm. It is a molecular chaperone that binds to a subset of precursor proteins, maintaining them in a translocation-competent state. It also specifically binds to its receptor SecA. This Haemophilus ducreyi (strain 35000HP / ATCC 700724) protein is Protein-export protein SecB.